A 188-amino-acid polypeptide reads, in one-letter code: MIRLTQRLTTEESAGKTLFTTLTLPIDLRIKSRLKVTLDNGDAAGLFLTRGQLLRGGECLTDDAGAVVVMVKAAEEQVSTVRCDDLLLLSRICYHLGNRHVPLQIEAGFARYQHDYVLDEMVVGLGGSVVVELAPFEPEAGAYQSQAGAGHHHHHDHDHGHSHDHSHTHSHADSAATAVPMHGFLKTS.

A disordered region spans residues 142-174; that stretch reads AYQSQAGAGHHHHHDHDHGHSHDHSHTHSHADS. The segment covering 157 to 172 has biased composition (basic and acidic residues); the sequence is HDHGHSHDHSHTHSHA.

Belongs to the UreE family.

The protein localises to the cytoplasm. Involved in urease metallocenter assembly. Binds nickel. Probably functions as a nickel donor during metallocenter assembly. The protein is Urease accessory protein UreE of Tolumonas auensis (strain DSM 9187 / NBRC 110442 / TA 4).